The primary structure comprises 421 residues: 3-oxoacyl-[acyl-carrier-protein] synthase 2 (421 aa).

Residues 1–417 form the Ketosynthase family 3 (KS3) domain; that stretch reads MRRVVITGTG…GTNASLILRR (417 aa). Catalysis depends on for beta-ketoacyl synthase activity residues C170, H311, and H347.

The protein belongs to the thiolase-like superfamily. Beta-ketoacyl-ACP synthases family. As to quaternary structure, homodimer.

It catalyses the reaction a fatty acyl-[ACP] + malonyl-[ACP] + H(+) = a 3-oxoacyl-[ACP] + holo-[ACP] + CO2. The enzyme catalyses (9Z)-hexadecenoyl-[ACP] + malonyl-[ACP] + H(+) = 3-oxo-(11Z)-octadecenoyl-[ACP] + holo-[ACP] + CO2. It functions in the pathway lipid metabolism; fatty acid biosynthesis. In terms of biological role, involved in the type II fatty acid elongation cycle. Catalyzes the elongation of a wide range of acyl-ACP by the addition of two carbons from malonyl-ACP to an acyl acceptor. Can efficiently catalyze the conversion of palmitoleoyl-ACP (cis-hexadec-9-enoyl-ACP) to cis-vaccenoyl-ACP (cis-octadec-11-enoyl-ACP), an essential step in the thermal regulation of fatty acid composition. The chain is 3-oxoacyl-[acyl-carrier-protein] synthase 2 (fabF) from Rhizobium meliloti (strain 1021) (Ensifer meliloti).